Reading from the N-terminus, the 306-residue chain is T-lymphocyte activation antigen CD80 (306 aa).

Positions 1 to 37 (MACNCQLMQDTPLLKFPCPRLILLFVLLIRLSQVSSD) are cleaved as a signal peptide. An Ig-like V-type domain is found at 38-135 (VDEQLSKSVK…RGTYEVKHLA (98 aa)). Residues 38 to 246 (VDEQLSKSVK…PPEDPPDSKN (209 aa)) lie on the Extracellular side of the membrane. Cys54 and Cys119 are oxidised to a cystine. 6 N-linked (GlcNAc...) asparagine glycosylation sites follow: Asn93, Asn99, Asn149, Asn189, Asn210, and Asn214. The Ig-like C2-type domain maps to 148 to 229 (PNITESGNPS…LIKYGDAHVS (82 aa)). Cys165 and Cys219 are oxidised to a cystine. The ig-hinge-like stretch occupies residues 227–246 (HVSEDFTWEKPPEDPPDSKN). The helical transmembrane segment at 247-268 (TLVLFGAGFGAVITVVVIVVII) threads the bilayer. The Cytoplasmic segment spans residues 269–306 (KCFCKHRSCFRRNEASRETNNSLTFGPEEALAEQTVFL).

In terms of assembly, homodimer. Interacts with CTLA4; this interaction inhibits T-cell activation. Interacts with PDL1/CD274; this interaction blocks PDL1/PDCD1 binding and thus PDL1 inhibitory function. Interacts with CD28. As to expression, expressed on activated B-cells, gamma interferon stimulated monocytes and non-circulating B-cell malignancies.

Its subcellular location is the cell membrane. Costimulatory molecule that belongs to the immunoglobulin superfamily that plays an important role in T-lymphocyte activation. Acts as the primary auxiliary signal augmenting the MHC/TCR signal in naive T-cells together with the CD28 receptor which is constitutively expressed on the cell surface of T-cells. In turn, activates different signaling pathways such as NF-kappa-B or MAPK leading to the production of different cytokines. In addition, CD28/CD80 costimulatory signal stimulates glucose metabolism and ATP synthesis of T-cells by activating the PI3K/Akt signaling pathway. Acts also as a regulator of PDL1/PDCD1 interactions to limit excess engagement of PDL1 and its inhibitory role in immune responses. Expressed on B-cells, plays a critical role in regulating interactions between B-cells and T-cells in both early and late germinal center responses, which are crucial for the generation of effective humoral immune responses. The sequence is that of T-lymphocyte activation antigen CD80 (Cd80) from Mus musculus (Mouse).